Consider the following 453-residue polypeptide: Glutamate-rich protein 5 (453 aa).

3 disordered regions span residues 1-38 (MGCS…ALGR), 66-377 (NGVQ…EHPA), and 394-453 (TNEE…HSML). Over residues 11–21 (AGDDNRLRSAT) the composition is skewed to basic and acidic residues. Serine 155 is subject to Phosphoserine. Polar residues-rich tracts occupy residues 230-243 (LQET…SQPL) and 271-283 (QETL…SQLR). Composition is skewed to basic and acidic residues over residues 305 to 332 (EEEK…EHGG), 364 to 374 (IQPERTVESME), and 394 to 403 (TNEEDQHIEG). A compositionally biased stretch (acidic residues) spans 404-413 (ETGETVETEM). Residues 414–424 (ESEKVSEGAET) are compositionally biased toward basic and acidic residues.

The polypeptide is Glutamate-rich protein 5 (ERICH5) (Bos taurus (Bovine)).